The sequence spans 861 residues: Integrator complex subunit 6-like (861 aa).

The 225-residue stretch at 3–227 (ILLFLIDTSA…QCLESLVQKV (225 aa)) folds into the VWFA domain. Positions 605–626 (PQNKVKRPGEPNSPMSSKRRRS) are disordered. Ser617 carries the phosphoserine modification.

This is Integrator complex subunit 6-like (INTS6L) from Homo sapiens (Human).